Consider the following 187-residue polypeptide: MKVLLGISGSSSVNLGLKLLKNLENQCELYCILTQGAKLNFKTENQANLEEICQENFKYTHFLDDKNLSLSVASGSFGIEKTIIAPCSISSLAKIHAGFADTLLMRAAAVALKERKKLILGVREMPFSTLNLEHMLKLSQMGVIIAPPIIASYSKANNLEQMENFIAGKWLDLLEIKHNLYEKWQNF.

FMN is bound by residues 9–11 (GSS), Thr-34, 88–91 (SISS), and Arg-123. Dimethylallyl phosphate contacts are provided by Tyr-153 and Lys-169.

Belongs to the UbiX/PAD1 family.

It catalyses the reaction dimethylallyl phosphate + FMNH2 = prenylated FMNH2 + phosphate. Flavin prenyltransferase that catalyzes the synthesis of the prenylated FMN cofactor (prenyl-FMN) for 4-hydroxy-3-polyprenylbenzoic acid decarboxylase UbiD. The prenyltransferase is metal-independent and links a dimethylallyl moiety from dimethylallyl monophosphate (DMAP) to the flavin N5 and C6 atoms of FMN. This chain is Flavin prenyltransferase UbiX, found in Campylobacter jejuni subsp. jejuni serotype O:2 (strain ATCC 700819 / NCTC 11168).